The primary structure comprises 453 residues: Phosphomannomutase (453 aa).

S96 acts as the Phosphoserine intermediate in catalysis. Mg(2+)-binding residues include S96, D243, D245, and D247.

The protein belongs to the phosphohexose mutase family. Mg(2+) is required as a cofactor.

It catalyses the reaction alpha-D-mannose 1-phosphate = D-mannose 6-phosphate. It participates in nucleotide-sugar biosynthesis; GDP-alpha-D-mannose biosynthesis; alpha-D-mannose 1-phosphate from D-fructose 6-phosphate: step 2/2. It functions in the pathway bacterial outer membrane biogenesis; LPS O-antigen biosynthesis. Its function is as follows. Involved in GDP-mannose biosynthesis which serves as the activated sugar nucleotide precursor for mannose residues in cell surface polysaccharides. This enzyme participates in synthesis of the LPS O7 antigen. The sequence is that of Phosphomannomutase (manB) from Escherichia coli.